Reading from the N-terminus, the 385-residue chain is Multidrug resistance protein MdtE (385 aa).

Positions 1 to 20 are cleaved as a signal peptide; it reads MNRRRKLLIPLLFCGAMLTA. Cys21 carries N-palmitoyl cysteine lipidation. A lipid anchor (S-diacylglycerol cysteine) is attached at Cys21.

It belongs to the membrane fusion protein (MFP) (TC 8.A.1) family. Homotrimer. Part of the tripartite efflux system MdtEF-TolC, which is composed of an inner membrane transporter, MdtF, a membrane fusion protein, MdtE, and an outer membrane component, TolC. The complex forms a large protein conduit and can translocate molecules across both the inner and outer membranes.

The protein localises to the cell inner membrane. Its function is as follows. Part of the tripartite efflux system MdtEF-TolC, which confers resistance to various compounds. This is Multidrug resistance protein MdtE (mdtE) from Escherichia coli O157:H7.